Reading from the N-terminus, the 354-residue chain is N-acetyl-gamma-glutamyl-phosphate reductase (354 aa).

The active site involves C156.

This sequence belongs to the NAGSA dehydrogenase family. Type 1 subfamily.

It localises to the cytoplasm. It catalyses the reaction N-acetyl-L-glutamate 5-semialdehyde + phosphate + NADP(+) = N-acetyl-L-glutamyl 5-phosphate + NADPH + H(+). It participates in amino-acid biosynthesis; L-arginine biosynthesis; N(2)-acetyl-L-ornithine from L-glutamate: step 3/4. Its function is as follows. Catalyzes the NADPH-dependent reduction of N-acetyl-5-glutamyl phosphate to yield N-acetyl-L-glutamate 5-semialdehyde. The polypeptide is N-acetyl-gamma-glutamyl-phosphate reductase (Bordetella bronchiseptica (strain ATCC BAA-588 / NCTC 13252 / RB50) (Alcaligenes bronchisepticus)).